We begin with the raw amino-acid sequence, 325 residues long: ATPase GET3 (325 aa).

Residue 34 to 41 (KGGVGKTT) participates in ATP binding. Asp63 is a catalytic residue. Positions 243 and 270 each coordinate ATP. Residues Cys281 and Cys284 each coordinate Zn(2+).

It belongs to the arsA ATPase family. Homodimer.

It is found in the cytoplasm. Its subcellular location is the endoplasmic reticulum. Functionally, ATPase required for the post-translational delivery of tail-anchored (TA) proteins to the endoplasmic reticulum. Recognizes and selectively binds the transmembrane domain of TA proteins in the cytosol. This complex then targets to the endoplasmic reticulum by membrane-bound receptors, where the tail-anchored protein is released for insertion. This process is regulated by ATP binding and hydrolysis. ATP binding drives the homodimer towards the closed dimer state, facilitating recognition of newly synthesized TA membrane proteins. ATP hydrolysis is required for insertion. Subsequently, the homodimer reverts towards the open dimer state, lowering its affinity for the membrane-bound receptor, and returning it to the cytosol to initiate a new round of targeting. The protein is ATPase GET3 of Coccidioides posadasii (strain C735) (Valley fever fungus).